The primary structure comprises 176 residues: Ribosome maturation factor RimM (176 aa).

In terms of domain architecture, PRC barrel spans 101 to 170 (EGEYFESDLI…RITVELPEGL (70 aa)).

The protein belongs to the RimM family. As to quaternary structure, binds ribosomal protein uS19.

It localises to the cytoplasm. Its function is as follows. An accessory protein needed during the final step in the assembly of 30S ribosomal subunit, possibly for assembly of the head region. Essential for efficient processing of 16S rRNA. May be needed both before and after RbfA during the maturation of 16S rRNA. It has affinity for free ribosomal 30S subunits but not for 70S ribosomes. The polypeptide is Ribosome maturation factor RimM (Solibacter usitatus (strain Ellin6076)).